An 849-amino-acid polypeptide reads, in one-letter code: Coiled-coil domain-containing protein 87 (849 aa).

Positions 387 to 415 (RHPAAGHRLEELEKMLRNLQEEEASGQWD) form a coiled coil.

This sequence belongs to the CCDC87 family.

Its function is as follows. Plays a role in spermatogenesis, where it is important for normal sperm head morphology. Also required for the acrosome reaction and thus normal male fertility. In Homo sapiens (Human), this protein is Coiled-coil domain-containing protein 87 (CCDC87).